Consider the following 460-residue polypeptide: Ribosomal protein uS12 methylthiotransferase RimO (460 aa).

The MTTase N-terminal domain maps to 18–134 (MKIHITSLGC…VTSIVAEVLR (117 aa)). [4Fe-4S] cluster contacts are provided by C27, C63, C97, C171, C175, and C178. The region spanning 157-387 (STPFHYAYVK…MVLQQEISLS (231 aa)) is the Radical SAM core domain. The 67-residue stretch at 390-456 (QEWIGKTLEV…HYDLMGEAID (67 aa)) folds into the TRAM domain.

The protein belongs to the methylthiotransferase family. RimO subfamily. The cofactor is [4Fe-4S] cluster.

It localises to the cytoplasm. The catalysed reaction is L-aspartate(89)-[ribosomal protein uS12]-hydrogen + (sulfur carrier)-SH + AH2 + 2 S-adenosyl-L-methionine = 3-methylsulfanyl-L-aspartate(89)-[ribosomal protein uS12]-hydrogen + (sulfur carrier)-H + 5'-deoxyadenosine + L-methionine + A + S-adenosyl-L-homocysteine + 2 H(+). Functionally, catalyzes the methylthiolation of an aspartic acid residue of ribosomal protein uS12. The polypeptide is Ribosomal protein uS12 methylthiotransferase RimO (Heliobacterium modesticaldum (strain ATCC 51547 / Ice1)).